A 606-amino-acid chain; its full sequence is Sulfite reductase [NADPH] flavoprotein alpha-component (606 aa).

The Flavodoxin-like domain occupies 68–206 (ITILSASQTG…AAEAWRKEVT (139 aa)). FMN-binding positions include 74–79 (SQTGNA), 121–124 (STQG), and 157–166 (LGDITYEHFA). Residues 240-454 (ESPLTATLSV…VEHNDNFRLP (215 aa)) enclose the FAD-binding FR-type domain. FAD-binding positions include T328, Q362, 392–395 (RLYS), 410–412 (TVG), Y416, and 425–428 (GGAS). Residues 525 to 526 (SR), 531 to 535 (KVYVQ), and D568 each bind NADP(+). An FAD-binding site is contributed by Y606.

Belongs to the NADPH-dependent sulphite reductase flavoprotein subunit CysJ family. This sequence in the N-terminal section; belongs to the flavodoxin family. It in the C-terminal section; belongs to the flavoprotein pyridine nucleotide cytochrome reductase family. Alpha(8)-beta(8). The alpha component is a flavoprotein, the beta component is a hemoprotein. It depends on FAD as a cofactor. FMN serves as cofactor.

It carries out the reaction hydrogen sulfide + 3 NADP(+) + 3 H2O = sulfite + 3 NADPH + 4 H(+). It functions in the pathway sulfur metabolism; hydrogen sulfide biosynthesis; hydrogen sulfide from sulfite (NADPH route): step 1/1. In terms of biological role, component of the sulfite reductase complex that catalyzes the 6-electron reduction of sulfite to sulfide. This is one of several activities required for the biosynthesis of L-cysteine from sulfate. The flavoprotein component catalyzes the electron flow from NADPH -&gt; FAD -&gt; FMN to the hemoprotein component. This chain is Sulfite reductase [NADPH] flavoprotein alpha-component, found in Zymomonas mobilis subsp. mobilis (strain ATCC 31821 / ZM4 / CP4).